The chain runs to 422 residues: Serine--tRNA ligase (422 aa).

Residue T229 to E231 participates in L-serine binding. Position 260 to 262 (R260 to E262) interacts with ATP. E283 contributes to the L-serine binding site. E347–S350 is an ATP binding site. Residue S383 coordinates L-serine.

This sequence belongs to the class-II aminoacyl-tRNA synthetase family. Type-1 seryl-tRNA synthetase subfamily. In terms of assembly, homodimer. The tRNA molecule binds across the dimer.

Its subcellular location is the cytoplasm. The enzyme catalyses tRNA(Ser) + L-serine + ATP = L-seryl-tRNA(Ser) + AMP + diphosphate + H(+). It carries out the reaction tRNA(Sec) + L-serine + ATP = L-seryl-tRNA(Sec) + AMP + diphosphate + H(+). The protein operates within aminoacyl-tRNA biosynthesis; selenocysteinyl-tRNA(Sec) biosynthesis; L-seryl-tRNA(Sec) from L-serine and tRNA(Sec): step 1/1. Functionally, catalyzes the attachment of serine to tRNA(Ser). Is also able to aminoacylate tRNA(Sec) with serine, to form the misacylated tRNA L-seryl-tRNA(Sec), which will be further converted into selenocysteinyl-tRNA(Sec). The chain is Serine--tRNA ligase from Pelobacter propionicus (strain DSM 2379 / NBRC 103807 / OttBd1).